A 172-amino-acid polypeptide reads, in one-letter code: Adenine phosphoribosyltransferase (172 aa).

It belongs to the purine/pyrimidine phosphoribosyltransferase family. Homodimer.

It localises to the cytoplasm. It catalyses the reaction AMP + diphosphate = 5-phospho-alpha-D-ribose 1-diphosphate + adenine. It functions in the pathway purine metabolism; AMP biosynthesis via salvage pathway; AMP from adenine: step 1/1. Functionally, catalyzes a salvage reaction resulting in the formation of AMP, that is energically less costly than de novo synthesis. This is Adenine phosphoribosyltransferase from Trichormus variabilis (strain ATCC 29413 / PCC 7937) (Anabaena variabilis).